Consider the following 638-residue polypeptide: Phosphomethylpyrimidine synthase (638 aa).

Residues asparagine 235, methionine 264, tyrosine 293, histidine 329, 349–351 (SRG), 390–393 (DGLR), and glutamate 429 each bind substrate. Histidine 433 contacts Zn(2+). Tyrosine 456 contacts substrate. Histidine 497 lines the Zn(2+) pocket. Cysteine 577, cysteine 580, and cysteine 585 together coordinate [4Fe-4S] cluster.

The protein belongs to the ThiC family. In terms of assembly, homodimer. [4Fe-4S] cluster is required as a cofactor.

It catalyses the reaction 5-amino-1-(5-phospho-beta-D-ribosyl)imidazole + S-adenosyl-L-methionine = 4-amino-2-methyl-5-(phosphooxymethyl)pyrimidine + CO + 5'-deoxyadenosine + formate + L-methionine + 3 H(+). Its pathway is cofactor biosynthesis; thiamine diphosphate biosynthesis. Functionally, catalyzes the synthesis of the hydroxymethylpyrimidine phosphate (HMP-P) moiety of thiamine from aminoimidazole ribotide (AIR) in a radical S-adenosyl-L-methionine (SAM)-dependent reaction. This is Phosphomethylpyrimidine synthase from Polaromonas naphthalenivorans (strain CJ2).